The following is a 160-amino-acid chain: Anaerobic nitrite reductase AHB1 (160 aa).

The 150-residue stretch at V8–N157 folds into the Globin domain. Residues E41–T45 carry the Homodimerization motif. Heme b is bound by residues S51, K65, H69, R99, S103, and H104. Positions D111 to E123 match the Homodimerization motif.

It belongs to the plant globin family. As to quaternary structure, homodimer. Heme b serves as cofactor. In terms of tissue distribution, expressed in roots and rosette leaves.

The protein resides in the cytoplasm. The protein localises to the nucleus. The enzyme catalyses Fe(III)-heme b-[protein] + nitric oxide + H2O = Fe(II)-heme b-[protein] + nitrite + 2 H(+). Its function is as follows. Phytoglobin that reduces nitrite to nitric oxide (NO) under anoxic conditions (e.g. during flooding or in waterlogged soil). May not function as an oxygen storage or transport protein. Has an unusually high affinity for O(2) through an hexacoordinate heme iron because of a very low dissociation constant. In Arabidopsis thaliana (Mouse-ear cress), this protein is Anaerobic nitrite reductase AHB1.